A 310-amino-acid polypeptide reads, in one-letter code: Glutaminase (310 aa).

Residues Ser66, Asn117, Glu161, Asn168, Tyr192, Tyr244, and Val262 each contribute to the substrate site.

The protein belongs to the glutaminase family. In terms of assembly, homotetramer.

It carries out the reaction L-glutamine + H2O = L-glutamate + NH4(+). The sequence is that of Glutaminase from Shigella boydii serotype 4 (strain Sb227).